Consider the following 301-residue polypeptide: Ribosomal protein L11 methyltransferase (301 aa).

S-adenosyl-L-methionine contacts are provided by T130, G151, D172, and N239.

Belongs to the methyltransferase superfamily. PrmA family.

The protein localises to the cytoplasm. The enzyme catalyses L-lysyl-[protein] + 3 S-adenosyl-L-methionine = N(6),N(6),N(6)-trimethyl-L-lysyl-[protein] + 3 S-adenosyl-L-homocysteine + 3 H(+). Functionally, methylates ribosomal protein L11. The polypeptide is Ribosomal protein L11 methyltransferase (Campylobacter hominis (strain ATCC BAA-381 / DSM 21671 / CCUG 45161 / LMG 19568 / NCTC 13146 / CH001A)).